Reading from the N-terminus, the 63-residue chain is Large ribosomal subunit protein bL28 (63 aa).

This sequence belongs to the bacterial ribosomal protein bL28 family.

This chain is Large ribosomal subunit protein bL28, found in Geotalea daltonii (strain DSM 22248 / JCM 15807 / FRC-32) (Geobacter daltonii).